We begin with the raw amino-acid sequence, 200 residues long: NADH-quinone oxidoreductase subunit C (200 aa).

It belongs to the complex I 30 kDa subunit family. In terms of assembly, NDH-1 is composed of 14 different subunits. Subunits NuoB, C, D, E, F, and G constitute the peripheral sector of the complex.

The protein localises to the cell inner membrane. It catalyses the reaction a quinone + NADH + 5 H(+)(in) = a quinol + NAD(+) + 4 H(+)(out). In terms of biological role, NDH-1 shuttles electrons from NADH, via FMN and iron-sulfur (Fe-S) centers, to quinones in the respiratory chain. The immediate electron acceptor for the enzyme in this species is believed to be ubiquinone. Couples the redox reaction to proton translocation (for every two electrons transferred, four hydrogen ions are translocated across the cytoplasmic membrane), and thus conserves the redox energy in a proton gradient. This Ralstonia pickettii (strain 12J) protein is NADH-quinone oxidoreductase subunit C.